An 86-amino-acid polypeptide reads, in one-letter code: Putative regulatory protein Desal_2819 (86 aa).

This sequence belongs to the RemA family.

The sequence is that of Putative regulatory protein Desal_2819 from Maridesulfovibrio salexigens (strain ATCC 14822 / DSM 2638 / NCIMB 8403 / VKM B-1763) (Desulfovibrio salexigens).